A 331-amino-acid polypeptide reads, in one-letter code: Tetraacyldisaccharide 4'-kinase (331 aa).

55–62 (SVGGNGKT) is an ATP binding site.

This sequence belongs to the LpxK family.

It catalyses the reaction a lipid A disaccharide + ATP = a lipid IVA + ADP + H(+). The protein operates within glycolipid biosynthesis; lipid IV(A) biosynthesis; lipid IV(A) from (3R)-3-hydroxytetradecanoyl-[acyl-carrier-protein] and UDP-N-acetyl-alpha-D-glucosamine: step 6/6. In terms of biological role, transfers the gamma-phosphate of ATP to the 4'-position of a tetraacyldisaccharide 1-phosphate intermediate (termed DS-1-P) to form tetraacyldisaccharide 1,4'-bis-phosphate (lipid IVA). This is Tetraacyldisaccharide 4'-kinase from Aeromonas salmonicida (strain A449).